The chain runs to 62 residues: ATP synthase subunit epsilon, mitochondrial (62 aa).

Residue Thr-52 is modified to Phosphothreonine.

It belongs to the eukaryotic ATPase epsilon family. F-type ATPases have 2 components, CF(1) - the catalytic core - and CF(0) - the membrane proton channel. CF(1) has five subunits: alpha(3), beta(3), gamma(1), delta(1), epsilon(1). CF(0) has three main subunits: a, b and c.

The protein resides in the mitochondrion. It is found in the mitochondrion inner membrane. In terms of biological role, mitochondrial membrane ATP synthase (F(1)F(0) ATP synthase or Complex V) produces ATP from ADP in the presence of a proton gradient across the membrane which is generated by electron transport complexes of the respiratory chain. F-type ATPases consist of two structural domains, F(1) - containing the extramembraneous catalytic core, and F(0) - containing the membrane proton channel, linked together by a central stalk and a peripheral stalk. During catalysis, ATP synthesis in the catalytic domain of F(1) is coupled via a rotary mechanism of the central stalk subunits to proton translocation. Part of the complex F(1) domain and of the central stalk which is part of the complex rotary element. Rotation of the central stalk against the surrounding alpha(3)beta(3) subunits leads to hydrolysis of ATP in three separate catalytic sites on the beta subunits. The polypeptide is ATP synthase subunit epsilon, mitochondrial (ATP15) (Saccharomyces cerevisiae (strain ATCC 204508 / S288c) (Baker's yeast)).